The sequence spans 243 residues: Orotidine 5'-phosphate decarboxylase (243 aa).

Residues Asp18, Lys39, Asp66–Thr75, Thr130, Arg192, Gln201, Gly221, and Arg222 each bind substrate. Lys68 functions as the Proton donor in the catalytic mechanism.

This sequence belongs to the OMP decarboxylase family. Type 1 subfamily. As to quaternary structure, homodimer.

It carries out the reaction orotidine 5'-phosphate + H(+) = UMP + CO2. The protein operates within pyrimidine metabolism; UMP biosynthesis via de novo pathway; UMP from orotate: step 2/2. Its function is as follows. Catalyzes the decarboxylation of orotidine 5'-monophosphate (OMP) to uridine 5'-monophosphate (UMP). The chain is Orotidine 5'-phosphate decarboxylase from Synechococcus sp. (strain CC9902).